The sequence spans 232 residues: MVLVCAGPGTGKSAFVLAYALKSKVPTLYFSADSDAFTQISRSVSILSGWSLERSTRAVREQSIEESIANDLDEIPIRFNYKASPSLDEIENALAAYDALYEDFPALIVVDNITNVRTESGDGDDPFSGLESLMDYLHEMARETGSCVIGLHHVTGPYNDGDKAIPLGGIKGQIGRVPEMVLTLHRESDGFGPDSLNVSTVKNRGGKSDPSGNDYAALEFIGDTMQINDFDH.

This chain is Gene 65 protein (65), found in Mycobacterium phage D29 (Mycobacteriophage D29).